The sequence spans 101 residues: Small ribosomal subunit protein bS6 (101 aa).

The protein belongs to the bacterial ribosomal protein bS6 family.

Functionally, binds together with bS18 to 16S ribosomal RNA. The protein is Small ribosomal subunit protein bS6 of Oleidesulfovibrio alaskensis (strain ATCC BAA-1058 / DSM 17464 / G20) (Desulfovibrio alaskensis).